We begin with the raw amino-acid sequence, 474 residues long: Pleckstrin homology domain-containing family S member 1 (474 aa).

A PH domain is found at 20 to 135 (EVHKRDYFIK…WVSFMTPYCQ (116 aa)). Disordered stretches follow at residues 232–251 (IAGP…DQGF), 272–321 (STSA…DDQK), and 449–474 (RDLP…AAGE). Residues 238–248 (SGDSIESNSPD) are compositionally biased toward polar residues. Over residues 449–458 (RDLPELERTP) the composition is skewed to basic and acidic residues.

In Mus musculus (Mouse), this protein is Pleckstrin homology domain-containing family S member 1.